The primary structure comprises 65 residues: Large ribosomal subunit protein uL29 (65 aa).

This sequence belongs to the universal ribosomal protein uL29 family.

This Bacteroides fragilis (strain ATCC 25285 / DSM 2151 / CCUG 4856 / JCM 11019 / LMG 10263 / NCTC 9343 / Onslow / VPI 2553 / EN-2) protein is Large ribosomal subunit protein uL29.